The primary structure comprises 157 residues: Iron-sulfur cluster repair protein DnrN (157 aa).

The protein belongs to the RIC family.

It is found in the cytoplasm. Di-iron-containing protein involved in the repair of iron-sulfur clusters damaged by oxidative and nitrosative stress conditions. Required to repair damage caused by nitric oxide to FNR and NsrR transcription factors. This is Iron-sulfur cluster repair protein DnrN (dnrN) from Neisseria gonorrhoeae.